Consider the following 250-residue polypeptide: 1-(5-phosphoribosyl)-5-[(5-phosphoribosylamino)methylideneamino] imidazole-4-carboxamide isomerase (250 aa).

The Proton acceptor role is filled by Asp8. Catalysis depends on Asp129, which acts as the Proton donor.

This sequence belongs to the HisA/HisF family.

The protein localises to the cytoplasm. It catalyses the reaction 1-(5-phospho-beta-D-ribosyl)-5-[(5-phospho-beta-D-ribosylamino)methylideneamino]imidazole-4-carboxamide = 5-[(5-phospho-1-deoxy-D-ribulos-1-ylimino)methylamino]-1-(5-phospho-beta-D-ribosyl)imidazole-4-carboxamide. It participates in amino-acid biosynthesis; L-histidine biosynthesis; L-histidine from 5-phospho-alpha-D-ribose 1-diphosphate: step 4/9. This chain is 1-(5-phosphoribosyl)-5-[(5-phosphoribosylamino)methylideneamino] imidazole-4-carboxamide isomerase, found in Desulfovibrio desulfuricans (strain ATCC 27774 / DSM 6949 / MB).